Reading from the N-terminus, the 89-residue chain is Prostaglandin E2 receptor EP3 subtype (89 aa).

The chain crosses the membrane as a helical span at residues 1–18 (GVWLAVLAFALLPVLGVG). The Extracellular segment spans residues 19–48 (QYTIQWPGTWCFISTGPGGNGTNSRQNWGN). Residue Asn-38 is glycosylated (N-linked (GlcNAc...) asparagine). The helical transmembrane segment at 49 to 74 (VFFASDFAILGLSALVVTFACNLATI) threads the bilayer. Topologically, residues 75–89 (KALVSRCRAKATASQ) are cytoplasmic.

It belongs to the G-protein coupled receptor 1 family. Interacts (via C-terminus) with MKLN1.

It localises to the cell membrane. Receptor for prostaglandin E2 (PGE2). Required for normal development of fever in response to pyrinogens, including IL1B, prostaglandin E2 and bacterial lipopolysaccharide (LPS). Required for normal potentiation of platelet aggregation by prostaglandin E2, and thus plays a role in the regulation of blood coagulation. Required for increased HCO3(-) secretion in the duodenum in response to mucosal acidification, and thereby contributes to the protection of the mucosa against acid-induced ulceration. Not required for normal kidney function, normal urine volume and osmolality. The sequence is that of Prostaglandin E2 receptor EP3 subtype (PTGER3) from Ovis aries (Sheep).